The sequence spans 186 residues: Adenylyl-sulfate kinase (186 aa).

17–24 (GLSGAGKT) contributes to the ATP binding site. The active-site Phosphoserine intermediate is S91.

It belongs to the APS kinase family.

The catalysed reaction is adenosine 5'-phosphosulfate + ATP = 3'-phosphoadenylyl sulfate + ADP + H(+). The protein operates within sulfur metabolism; hydrogen sulfide biosynthesis; sulfite from sulfate: step 2/3. Functionally, catalyzes the synthesis of activated sulfate. This is Adenylyl-sulfate kinase from Chloroflexus aurantiacus (strain ATCC 29364 / DSM 637 / Y-400-fl).